The following is a 378-amino-acid chain: MKLHEYQARDIVARYGIPVTGGGVAATAEEVQKVAEQIGGPVAVKAQVHVGGRGKAGGIKLANTPAEAFDAGKAILGMDIKGLTVEKVLVAEAITFEKEIYLGVILDRATKRVVLIASSEGGVEIEEVAKINPDAIIKLAADPLLGLQPYQAQELAYSIGITDAKQARQFSSIATGLYRAFVENDAELAEINPLVVLPNGQLQALDSKIVLDDSGLFRHSEVAGMRDIAGEPESEIKARENGLTFIKLDGNIGCMVNGAGLAMATMDVVNLFGGEPANFLDIGGGANAQKVAAALDIILDDPNVKVVMVNIFGGITRCDEVAKGIVEAQKIIKRQVPMVVRLVGTNEAEGQRILADASLTPASTLADAAQKAVDIAKQ.

In terms of domain architecture, ATP-grasp spans 9–237 (RDIVARYGIP…IAGEPESEIK (229 aa)). ATP-binding positions include lysine 45, 52–54 (GRG), isoleucine 94, and glutamate 99. Asparagine 192 and aspartate 206 together coordinate Mg(2+). Substrate contacts are provided by residues asparagine 257 and 314–316 (GIT).

This sequence belongs to the succinate/malate CoA ligase beta subunit family. As to quaternary structure, heterotetramer of two alpha and two beta subunits. Mg(2+) serves as cofactor.

It carries out the reaction succinate + ATP + CoA = succinyl-CoA + ADP + phosphate. It catalyses the reaction GTP + succinate + CoA = succinyl-CoA + GDP + phosphate. Its pathway is carbohydrate metabolism; tricarboxylic acid cycle; succinate from succinyl-CoA (ligase route): step 1/1. Functionally, succinyl-CoA synthetase functions in the citric acid cycle (TCA), coupling the hydrolysis of succinyl-CoA to the synthesis of either ATP or GTP and thus represents the only step of substrate-level phosphorylation in the TCA. The beta subunit provides nucleotide specificity of the enzyme and binds the substrate succinate, while the binding sites for coenzyme A and phosphate are found in the alpha subunit. The sequence is that of Succinate--CoA ligase [ADP-forming] subunit beta from Herpetosiphon aurantiacus (strain ATCC 23779 / DSM 785 / 114-95).